Consider the following 377-residue polypeptide: Flagellin C (377 aa).

2 coiled-coil regions span residues 103–129 (SNSK…VAET) and 301–340 (VDSH…KDTD).

The protein belongs to the bacterial flagellin family. Heteromer of multiple flagellin subunits including FlaA, FlaB, FlaC, FlaD and FlaE.

The protein resides in the secreted. The protein localises to the bacterial flagellum. Its function is as follows. Flagellin is the subunit protein which polymerizes to form the filaments of bacterial flagella. FlaC is not essential for flagellar synthesis and motility. The polypeptide is Flagellin C (flaC) (Vibrio cholerae serotype O1 (strain ATCC 39541 / Classical Ogawa 395 / O395)).